The following is a 426-amino-acid chain: MSKSENLYSAARELIPGGVNSPVRAFTGVGGTPLFIEKADGAYLYDVDGKAYIDYVGSWGPMVLGHNHPAIRNAVIEAAERGLSFGAPTEMEVKMAQLVTELVPTMDMVRMVNSGTEATMSAIRLARGFTGRDKIIKFEGCYHGHADCLLVKAGSGALTLGQPNSPGVPADFAKHTLTCTYNDLASVRAAFEQYPQEIACIIVEPVAGNMNCVPPLPEFLPGLRALCDEFGALLIIDEVMTGFRVALAGAQDYYGVVPDLTCLGKIIGGGMPVGAFGGRRDVMDALAPTGPVYQAGTLSGNPIAMAAGFACLNEVAQPGVHETLDELTTRLAEGLREAAEEAGIPLVVNHVGGMFGIFFTDAESVTCYQDVMACDVERFKRFFHMMLDEGVYLAPSAFEAGFMSVAHSMEDINNTIDAARRVFAKL.

K265 carries the post-translational modification N6-(pyridoxal phosphate)lysine.

Belongs to the class-III pyridoxal-phosphate-dependent aminotransferase family. HemL subfamily. In terms of assembly, homodimer. Pyridoxal 5'-phosphate is required as a cofactor.

The protein resides in the cytoplasm. The enzyme catalyses (S)-4-amino-5-oxopentanoate = 5-aminolevulinate. It participates in porphyrin-containing compound metabolism; protoporphyrin-IX biosynthesis; 5-aminolevulinate from L-glutamyl-tRNA(Glu): step 2/2. This is Glutamate-1-semialdehyde 2,1-aminomutase from Escherichia coli O7:K1 (strain IAI39 / ExPEC).